A 394-amino-acid polypeptide reads, in one-letter code: Phosphopentomutase (394 aa).

Positions 15, 288, 293, 329, 330, and 341 each coordinate Mn(2+).

The protein belongs to the phosphopentomutase family. Requires Mn(2+) as cofactor.

The protein resides in the cytoplasm. It catalyses the reaction 2-deoxy-alpha-D-ribose 1-phosphate = 2-deoxy-D-ribose 5-phosphate. The catalysed reaction is alpha-D-ribose 1-phosphate = D-ribose 5-phosphate. The protein operates within carbohydrate degradation; 2-deoxy-D-ribose 1-phosphate degradation; D-glyceraldehyde 3-phosphate and acetaldehyde from 2-deoxy-alpha-D-ribose 1-phosphate: step 1/2. Its function is as follows. Isomerase that catalyzes the conversion of deoxy-ribose 1-phosphate (dRib-1-P) and ribose 1-phosphate (Rib-1-P) to deoxy-ribose 5-phosphate (dRib-5-P) and ribose 5-phosphate (Rib-5-P), respectively. The sequence is that of Phosphopentomutase from Bacillus licheniformis (strain ATCC 14580 / DSM 13 / JCM 2505 / CCUG 7422 / NBRC 12200 / NCIMB 9375 / NCTC 10341 / NRRL NRS-1264 / Gibson 46).